Consider the following 245-residue polypeptide: tRNA1(Val) (adenine(37)-N6)-methyltransferase (245 aa).

The protein belongs to the methyltransferase superfamily. tRNA (adenine-N(6)-)-methyltransferase family.

It localises to the cytoplasm. It catalyses the reaction adenosine(37) in tRNA1(Val) + S-adenosyl-L-methionine = N(6)-methyladenosine(37) in tRNA1(Val) + S-adenosyl-L-homocysteine + H(+). Functionally, specifically methylates the adenine in position 37 of tRNA(1)(Val) (anticodon cmo5UAC). The polypeptide is tRNA1(Val) (adenine(37)-N6)-methyltransferase (Salmonella typhi).